Here is a 365-residue protein sequence, read N- to C-terminus: Mannonate dehydratase 1 (365 aa).

The protein belongs to the mannonate dehydratase family. Requires Fe(2+) as cofactor. Mn(2+) serves as cofactor.

The catalysed reaction is D-mannonate = 2-dehydro-3-deoxy-D-gluconate + H2O. It participates in carbohydrate metabolism; pentose and glucuronate interconversion. Functionally, catalyzes the dehydration of D-mannonate. In Bacillus licheniformis (strain ATCC 14580 / DSM 13 / JCM 2505 / CCUG 7422 / NBRC 12200 / NCIMB 9375 / NCTC 10341 / NRRL NRS-1264 / Gibson 46), this protein is Mannonate dehydratase 1.